The chain runs to 228 residues: Small ribosomal subunit protein uS3 (228 aa).

One can recognise a KH type-2 domain in the interval 39–107 (VREFIRERLK…PVHINIEEIR (69 aa)).

It belongs to the universal ribosomal protein uS3 family. Part of the 30S ribosomal subunit. Forms a tight complex with proteins S10 and S14.

Binds the lower part of the 30S subunit head. Binds mRNA in the 70S ribosome, positioning it for translation. This is Small ribosomal subunit protein uS3 from Halorhodospira halophila (strain DSM 244 / SL1) (Ectothiorhodospira halophila (strain DSM 244 / SL1)).